We begin with the raw amino-acid sequence, 347 residues long: Protein YIPF3 (347 aa).

The tract at residues 1-31 (MATPAAPASGVRNGAGPEWGGFEENIQGGGS) is disordered. A2 is modified (N-acetylalanine; in Protein YIPF3, N-terminally processed). At 2-145 (ATPAAPASGV…PIKMVNFPQK (144 aa)) the chain is on the cytoplasmic side. The helical transmembrane segment at 146–166 (VAGELYGPLMLVFTLVAILLH) threads the bilayer. Topologically, residues 167-184 (GMKTSDTIIREGTLMGTA) are lumenal. The chain crosses the membrane as a helical span at residues 185–205 (IGTCFGYWLGVSSFIYFLAYL). Residues 206 to 211 (CNAQIT) are Cytoplasmic-facing. Residues 212 to 234 (MLQMLALLGYGLFGHCIVLFITY) form a helical membrane-spanning segment. The Lumenal portion of the chain corresponds to 235–237 (NIH). A helical transmembrane segment spans residues 238–260 (LHALFYLFWLLVGGLSTLRMVAV). The Cytoplasmic portion of the chain corresponds to 261 to 271 (LVSRTVGPTQR). The chain crosses the membrane as a helical span at residues 272 to 292 (LLLCGTLAALHMLFLLYLHFA). At 293 to 347 (YHKVVEGILDTLEGPNIPPMQRVPRDIPAVLPAARLPVAVINATAKAIAVTLQSH) the chain is on the lumenal side. The N-linked (GlcNAc...) asparagine glycan is linked to N334.

Belongs to the YIP1 family. Interacts with YIPF4 and YIPF5. As to expression, expressed by splenocytes (at protein level).

The protein resides in the cell membrane. Its subcellular location is the golgi apparatus. It is found in the cis-Golgi network membrane. The protein localises to the cytoplasm. Functionally, involved in the maintenance of the Golgi structure. May play a role in hematopoiesis. In Mus musculus (Mouse), this protein is Protein YIPF3 (Yipf3).